The primary structure comprises 478 residues: Pyruvate kinase (478 aa).

Arg36 serves as a coordination point for substrate. 3 residues coordinate K(+): Asn38, Ser40, and Asp70. Residue Asn38–His41 coordinates ATP. ATP is bound by residues Arg77 and Lys160. A Mg(2+)-binding site is contributed by Glu225. The substrate site is built by Gly251, Asp252, and Thr284. Asp252 contacts Mg(2+).

This sequence belongs to the pyruvate kinase family. In terms of assembly, homotetramer. It depends on Mg(2+) as a cofactor. K(+) is required as a cofactor.

The catalysed reaction is pyruvate + ATP = phosphoenolpyruvate + ADP + H(+). Its pathway is carbohydrate degradation; glycolysis; pyruvate from D-glyceraldehyde 3-phosphate: step 5/5. Allosterically activated by AMP and by several sugar phosphates. Belongs to type II PK. In Haemophilus influenzae (strain ATCC 51907 / DSM 11121 / KW20 / Rd), this protein is Pyruvate kinase (pykA).